A 310-amino-acid polypeptide reads, in one-letter code: MKMKVLEVVGLAISIWLMLTPPASSNIVFDVENATPETYSNFLTSLREAVKDKKLTCHGMIMATTLTEQPKYVLVDLKFGSGTFTLAIRRGNLYLEGYSDIYNGKCRYRIFKDSESDAQETVCPGDKSKPGTQNNIPYEKSYKGMESKGGARTKLGLGKITLKSRMGKIYGKDATDQKQYQKNEAEFLLIAVQMVTEASRFKYIENKVKAKFDDANGYQPDPKAISLEKNWDSVSKVIAKVGTSGDSTVTLPGDLKDENNKPWTTATMNDLKNDIMALLTHVTCKVKSSMFPEIMSYYYRTSISNLGEFE.

Positions Met-1–Ser-25 are cleaved as a signal peptide. Cystine bridges form between Cys-57-Cys-284 and Cys-106-Cys-123. Tyr-94 is an active-site residue. Active-site residues include Tyr-142, Glu-197, and Arg-200.

The protein belongs to the ribosome-inactivating protein family. Type 1 RIP subfamily. As to expression, PAP-II is expressed in early summer leaves (at protein level). PAP-III is expressed in late summer leaves (at protein level).

It catalyses the reaction Endohydrolysis of the N-glycosidic bond at one specific adenosine on the 28S rRNA.. Functionally, possesses antiviral potency. Inhibits viral infection of plants (tobacco mosaic virus). Inhibits protein synthesis in both prokaryotes and eukaryotes. The polypeptide is Antiviral protein II/III (PAP2) (Phytolacca americana (American pokeweed)).